A 155-amino-acid chain; its full sequence is UPF0461 protein C5orf24 homolog (155 aa).

Over residues 60-69 the composition is skewed to polar residues; that stretch reads NETHLQTSTS. Residues 60-155 form a disordered region; the sequence is NETHLQTSTS…QQALMCSSDA (96 aa). The span at 78–92 shows a compositional bias: basic residues; it reads LKKKKNVGRSGKRGR. The segment covering 94–107 has biased composition (polar residues); sequence SGTTKSAGYRTSTG.

This sequence belongs to the UPF0461 family.

In Xenopus laevis (African clawed frog), this protein is UPF0461 protein C5orf24 homolog.